A 905-amino-acid chain; its full sequence is Protein translocase subunit SecA (905 aa).

ATP contacts are provided by residues Gln-87, 105–109 (GEGKT), and Asp-509. Residues Cys-890, Cys-892, Cys-901, and His-902 each contribute to the Zn(2+) site.

It belongs to the SecA family. In terms of assembly, monomer and homodimer. Part of the essential Sec protein translocation apparatus which comprises SecA, SecYEG and auxiliary proteins SecDF-YajC and YidC. Requires Zn(2+) as cofactor.

The protein localises to the cell inner membrane. Its subcellular location is the cytoplasm. The enzyme catalyses ATP + H2O + cellular proteinSide 1 = ADP + phosphate + cellular proteinSide 2.. In terms of biological role, part of the Sec protein translocase complex. Interacts with the SecYEG preprotein conducting channel. Has a central role in coupling the hydrolysis of ATP to the transfer of proteins into and across the cell membrane, serving both as a receptor for the preprotein-SecB complex and as an ATP-driven molecular motor driving the stepwise translocation of polypeptide chains across the membrane. This chain is Protein translocase subunit SecA, found in Acinetobacter baylyi (strain ATCC 33305 / BD413 / ADP1).